A 2311-amino-acid chain; its full sequence is Proto-oncogene tyrosine-protein kinase ROS (2311 aa).

Positions 1 to 24 (MRNACLLLNRLGAFYFIWISAAYC) are cleaved as a signal peptide. At 25–1873 (SFSKNCQDLC…LAKDTVTSPD (1849 aa)) the chain is on the extracellular side. N-linked (GlcNAc...) asparagine glycans are attached at residues Asn-49, Asn-65, Asn-77, Asn-123, Asn-132, Asn-265, Asn-287, Asn-307, Asn-333, Asn-377, Asn-405, Asn-480, Asn-607, Asn-628, Asn-706, Asn-714, Asn-911, Asn-940, Asn-962, Asn-971, Asn-1110, Asn-1154, Asn-1180, Asn-1233, Asn-1255, Asn-1282, Asn-1316, Asn-1470, Asn-1509, Asn-1588, Asn-1628, Asn-1682, Asn-1696, and Asn-1730. Fibronectin type-III domains lie at 110 to 202 (KPGA…ASGV) and 203 to 294 (PTTA…PESK). A Fibronectin type-III 3 domain is found at 571-671 (LPTLPRLVTV…EPFRGMTFEE (101 aa)). Fibronectin type-III domains are found at residues 952–1047 (VPES…APEG) and 1051–1158 (APAN…SSDI). Fibronectin type-III domains follow at residues 1459–1569 (DTEK…TLYG), 1570–1669 (VPEG…AKTF), 1671–1766 (TPLS…TTAG), and 1767–1868 (VPSK…AKDT). Residues 1754-1764 (STSSPTSFKTT) are compositionally biased toward low complexity. Residues 1754–1786 (STSSPTSFKTTAGVPSKPGTPKRAEDSKNSVQW) form a disordered region. Residues 1775 to 1786 (KRAEDSKNSVQW) are compositionally biased toward basic and acidic residues. N-linked (GlcNAc...) asparagine glycosylation is found at Asn-1792, Asn-1795, and Asn-1822. A helical membrane pass occupies residues 1874-1898 (ITAIVAVIGAVVLGLTIIILFGFVW). The Cytoplasmic portion of the chain corresponds to 1899–2311 (HQRWKSRKPA…SISSAELTSV (413 aa)). The region spanning 1961–2240 (LNLHKLLGSG…KLQEIRHSPL (280 aa)) is the Protein kinase domain. ATP-binding positions include 1967–1975 (LGSGAFGEV) and Lys-1996. Asp-2095 (proton acceptor) is an active-site residue. Tyr-2131 is modified (phosphotyrosine; by autocatalysis).

Belongs to the protein kinase superfamily. Tyr protein kinase family. Insulin receptor subfamily. As to quaternary structure, interacts with VAV3; constitutive interaction mediating VAV3 phosphorylation. Highest expression in kidney. Also expressed in gonad, thymus, bursa, brain and kidney.

The protein localises to the cell membrane. It catalyses the reaction L-tyrosyl-[protein] + ATP = O-phospho-L-tyrosyl-[protein] + ADP + H(+). Its function is as follows. Orphan receptor tyrosine kinase (RTK) that may activate several downstream signaling pathways related to cell differentiation, proliferation, growth and survival including the PI3 kinase-mTOR signaling pathway. Mediates the phosphorylation of PTPN11, an activator of this pathway. May also phosphorylate and activate the transcription factor STAT3 to control anchorage-independent cell growth. Mediates the phosphorylation and the activation of VAV3, a guanine nucleotide exchange factor regulating cell morphology. May activate other downstream signaling proteins including AKT1, MAPK1, MAPK3, IRS1, and PLCG2. This chain is Proto-oncogene tyrosine-protein kinase ROS (ROS1), found in Gallus gallus (Chicken).